A 710-amino-acid chain; its full sequence is Dual specificity protein kinase shkE (710 aa).

3 stretches are compositionally biased toward low complexity: residues Asp-83–Ser-94, Asn-107–Asn-129, and Gln-197–Gln-208. Disordered regions lie at residues Asp-83 to Ile-136 and Gln-189 to Glu-232. The Protein kinase domain occupies Asp-237–Leu-495. Residues Leu-243–Val-251 and Lys-264 each bind ATP. Residue Asp-359 is the Proton acceptor of the active site. One can recognise an SH2 domain in the interval Trp-597–Tyr-707.

It belongs to the protein kinase superfamily. Ser/Thr protein kinase family. SH2 domain-containing protein kinase subfamily.

Its subcellular location is the membrane. It carries out the reaction L-seryl-[protein] + ATP = O-phospho-L-seryl-[protein] + ADP + H(+). The catalysed reaction is L-threonyl-[protein] + ATP = O-phospho-L-threonyl-[protein] + ADP + H(+). In terms of biological role, required for proper chemotaxis and phagocytosis; proper spatiotemporal control of F-actin levels in chemotaxing cells. Negative regulator of the PI3K (phosphatidylinositol 3 kinase) pathway. Predominantly phosphorylates serines and threonines and tyrosines at a lower level. This Dictyostelium discoideum (Social amoeba) protein is Dual specificity protein kinase shkE (shkE).